The following is a 142-amino-acid chain: Coactosin-like protein (142 aa).

A2 bears the N-acetylalanine mark. Residues 2 to 130 (ATKIDKEACR…EEDFIRSELK (129 aa)) form the ADF-H domain. A flexible and important for F-actin binding region spans residues 66–75 (TGDAMSKRSK). At K102 the chain carries N6-acetyllysine. S141 bears the Phosphoserine mark.

The protein belongs to the actin-binding proteins ADF family. Coactosin subfamily. Interacts with 5-lipoxygenase (ALOX5/5LO) in a calcium-independent manner. Binds to F-actin with a stoichiometry of 1:2.

It is found in the cytoplasm. The protein localises to the cytoskeleton. Its subcellular location is the nucleus. Functionally, binds to F-actin in a calcium-independent manner. Has no direct effect on actin depolymerization. Acts as a chaperone for ALOX5 (5LO), influencing both its stability and activity in leukotrienes synthesis. In Mus musculus (Mouse), this protein is Coactosin-like protein (Cotl1).